Consider the following 119-residue polypeptide: Large ribosomal subunit protein bL19 (119 aa).

It belongs to the bacterial ribosomal protein bL19 family.

Its function is as follows. This protein is located at the 30S-50S ribosomal subunit interface and may play a role in the structure and function of the aminoacyl-tRNA binding site. The chain is Large ribosomal subunit protein bL19 from Saccharopolyspora erythraea (strain ATCC 11635 / DSM 40517 / JCM 4748 / NBRC 13426 / NCIMB 8594 / NRRL 2338).